The following is a 256-amino-acid chain: Pre-mRNA-splicing factor CWC24 (256 aa).

The disordered stretch occupies residues 1 to 80 (MFKRKKNAGQ…SRNLSKTDEA (80 aa)). The span at 18–34 (SDSSSEGSGDESALSSA) shows a compositional bias: low complexity. The segment covering 45–66 (RTTPTSVATSTKVRAPSFSSTI) has biased composition (polar residues). A compositionally biased stretch (basic and acidic residues) spans 67 to 80 (DHSHSRNLSKTDEA). Residues 131-159 (DYQPDVCKDYKLTGFCGYGDSCKFLHMRE) form a C3H1-type zinc finger. A compositionally biased stretch (basic and acidic residues) spans 173-182 (IKNREDDPPR). The tract at residues 173-200 (IKNREDDPPRDAGGVSRDADTATSRADS) is disordered. The RING-type zinc-finger motif lies at 206–244 (CPICQGEFKSPVVTQCCHYFCEKCFLAKHKKKQNCFVCG).

Belongs to the CWC24 family. Associated with the spliceosome.

It localises to the nucleus. Its function is as follows. Involved in pre-mRNA splicing. In Yarrowia lipolytica (strain CLIB 122 / E 150) (Yeast), this protein is Pre-mRNA-splicing factor CWC24 (CWC24).